The primary structure comprises 733 residues: Putative cyclic nucleotide-gated ion channel 9 (733 aa).

Over 1–117 (MLDCGKKAVK…DKFLLLCNKL (117 aa)) the chain is Cytoplasmic. A helical membrane pass occupies residues 118–138 (FVTSCILAVSVDPLFLYLPFV). Topologically, residues 139 to 151 (KDNEKCIGIDRKL) are extracellular. Residues 152–172 (AIIATTLRTVIDAFYLFHMAL) traverse the membrane as a helical segment. The Cytoplasmic portion of the chain corresponds to 173-207 (RFRTAFVAPSSRVFGRGELVIDPAQIAKRYLQQYF). A helical transmembrane segment spans residues 208–228 (IIDFLSVLPLPQIVVWRFLYI). At 229–239 (SKGASVLATKR) the chain is on the extracellular side. A helical membrane pass occupies residues 240–260 (ALRSIILVQYIPRFIRLYPLS). The Cytoplasmic portion of the chain corresponds to 261-280 (SELKRTAGVFAETAWAGAAY). Residues 281-301 (YLLLYMLASHIVGAIWYLLAL) form a helical membrane-spanning segment. Residues 302 to 406 (ERYNGCWTKV…GQGLETSTYP (105 aa)) lie on the Extracellular side of the membrane. The chain crosses the membrane as a helical span at residues 407–427 (GEVIFSIALAIAGLLLFALLI). Over 428 to 733 (GNMQTYLQSL…EPDFSADDTS (306 aa)) the chain is Cytoplasmic. A nucleoside 3',5'-cyclic phosphate-binding positions include 513 to 637 (LFEN…SRQV) and Glu584. The interval 629–644 (FRRLHSRQVQHTFRFY) is calmodulin-binding. Positions 649–678 (RTWAAIFIQAAWRRYVKKKKLEQLRKEEEE) constitute an IQ domain.

Belongs to the cyclic nucleotide-gated cation channel (TC 1.A.1.5) family. As to quaternary structure, homotetramer or heterotetramer.

Its subcellular location is the cell membrane. Its function is as follows. Putative cyclic nucleotide-gated ion channel. The chain is Putative cyclic nucleotide-gated ion channel 9 (CNGC9) from Arabidopsis thaliana (Mouse-ear cress).